The chain runs to 157 residues: Transcriptional repressor NrdR (157 aa).

Polar residues predominate over residues 1-11; the sequence is MQCPSCQNTDS. A disordered region spans residues 1–21; it reads MQCPSCQNTDSRVLESRSADT. The segment at 3-34 is a zinc-finger region; it reads CPSCQNTDSRVLESRSADTGKSVRRRRECLNC. The ATP-cone domain occupies 49-139; sequence ITVIKRSESK…VYRQFNGIND (91 aa).

Belongs to the NrdR family. The cofactor is Zn(2+).

In terms of biological role, negatively regulates transcription of bacterial ribonucleotide reductase nrd genes and operons by binding to NrdR-boxes. The polypeptide is Transcriptional repressor NrdR (Prochlorococcus marinus (strain MIT 9211)).